A 365-amino-acid polypeptide reads, in one-letter code: uncharacterized protein (365 aa).

A coiled-coil region spans residues threonine 18–histidine 46.

This is an uncharacterized protein from Bacillus subtilis (strain 168).